Reading from the N-terminus, the 175-residue chain is uncharacterized protein (175 aa).

The first 23 residues, Met1–Gln23, serve as a signal peptide directing secretion.

This is an uncharacterized protein from Invertebrate iridescent virus 6 (IIV-6).